We begin with the raw amino-acid sequence, 273 residues long: NH(3)-dependent NAD(+) synthetase (273 aa).

47–54 lines the ATP pocket; it reads GISGGQDS. Aspartate 53 provides a ligand contact to Mg(2+). Residue arginine 139 coordinates deamido-NAD(+). Threonine 159 is an ATP binding site. Glutamate 164 provides a ligand contact to Mg(2+). Deamido-NAD(+) contacts are provided by lysine 172 and aspartate 179. ATP contacts are provided by lysine 188 and threonine 210. 259–260 provides a ligand contact to deamido-NAD(+); it reads HK.

Belongs to the NAD synthetase family. As to quaternary structure, homodimer.

It catalyses the reaction deamido-NAD(+) + NH4(+) + ATP = AMP + diphosphate + NAD(+) + H(+). Its pathway is cofactor biosynthesis; NAD(+) biosynthesis; NAD(+) from deamido-NAD(+) (ammonia route): step 1/1. In terms of biological role, catalyzes the ATP-dependent amidation of deamido-NAD to form NAD. Uses ammonia as a nitrogen source. This Staphylococcus haemolyticus (strain JCSC1435) protein is NH(3)-dependent NAD(+) synthetase.